We begin with the raw amino-acid sequence, 221 residues long: MSDVFDGYERQYCELSASLSKKCSSAISLDGEQKKQKLSEIKSGLENAEVLIRKMDLEARTLPPNLKSSLLVKLREFKSDLNNFKTEVKRITSGQLNAAARDELLEAGMADTKTASADQRARLMMSTERLGRTTDRVKDSRRTMMETEEIGVSILQDLHGQRQSLLRAHETLHGVDDNIGKSKKILTDMTRRMNKNKWTIGAIIIALIAAIFIILYFKLTK.

Position 2 is an N-acetylserine (S2). The Cytoplasmic segment spans residues 2–198 (SDVFDGYERQ…MTRRMNKNKW (197 aa)). Residues 32-93 (EQKKQKLSEI…FKTEVKRITS (62 aa)) are a coiled coil. A helical; Anchor for type IV membrane protein membrane pass occupies residues 199–219 (TIGAIIIALIAAIFIILYFKL). Residues 220–221 (TK) are Vesicular-facing.

This sequence belongs to the VTI1 family. In terms of assembly, forms SNARE complexes with the t-SNAREs SYP51 and either SYP21 or SYP22 in the PVC, and with a much lower affinity with SYP61 in the TGN. Does not interact with SYP41, SYP42 or VPS45. Binds to EPSIN1. Interacts with SCYL2B. Expressed in roots, stems, flowers and leaves.

The protein resides in the golgi apparatus. Its subcellular location is the trans-Golgi network membrane. The protein localises to the prevacuolar compartment membrane. It localises to the vacuole membrane. Functionally, functions as a v-SNARE responsible for targeting AtELP-containing vesicles from the trans-Golgi network (TGN) to the prevacuolar compartment (PVC) and mediates liposome fusion. May be also involved in retrograde traffic to the cis-Golgi. Promotes the formation of vacuolar membrane 'bulbs'. Necessary to deliver proteins to the lytic vacuole, but seems not involved in storage proteins transport. Required for amyloplast sedimentation in the endodermis during shoot gravitropism, which are thus acting as statoliths. Expression in the endodermis is essential for the shoot gravitropic response, whereas expression in other tissues may be responsible for the correct stem and leaf shape. This Arabidopsis thaliana (Mouse-ear cress) protein is Vesicle transport v-SNARE 11.